Consider the following 231-residue polypeptide: Putative histone H1.9 (231 aa).

The H15 domain occupies 113–177 (QKPSTSKVIL…GSAGSFTLGK (65 aa)). A Phosphoserine modification is found at serine 135. The disordered stretch occupies residues 177 to 214 (KKQASKSKLKVKRQRQQRWRSGQRPFGQHRSLLGSKQG). The segment covering 179 to 194 (QASKSKLKVKRQRQQR) has biased composition (basic residues).

The protein belongs to the histone H1/H5 family. In terms of tissue distribution, expressed exclusively in the testis.

It is found in the nucleus. It localises to the chromosome. Functionally, DNA-binding protein that may be implicated in chromatin remodeling and/or transcriptional regulation during spermiogenesis, the process of spermatid maturation into spermatozoa. In Homo sapiens (Human), this protein is Putative histone H1.9.